Here is a 145-residue protein sequence, read N- to C-terminus: FAD synthase (145 aa).

Residues 9 to 10 (TF), 14 to 17 (HPGH), Asp-94, and Tyr-122 each bind ATP.

It belongs to the archaeal FAD synthase family. As to quaternary structure, homodimer. It depends on a divalent metal cation as a cofactor.

It carries out the reaction FMN + ATP + H(+) = FAD + diphosphate. Its pathway is cofactor biosynthesis; FAD biosynthesis; FAD from FMN: step 1/1. Functionally, catalyzes the transfer of the AMP portion of ATP to flavin mononucleotide (FMN) to produce flavin adenine dinucleotide (FAD) coenzyme. This chain is FAD synthase, found in Methanocaldococcus infernus (strain DSM 11812 / JCM 15783 / ME).